The following is a 111-amino-acid chain: Iron-sulfur cluster insertion protein ErpA (111 aa).

Positions 39, 103, and 105 each coordinate iron-sulfur cluster.

Belongs to the HesB/IscA family. As to quaternary structure, homodimer. Iron-sulfur cluster serves as cofactor.

In terms of biological role, required for insertion of 4Fe-4S clusters for at least IspG. This chain is Iron-sulfur cluster insertion protein ErpA, found in Acinetobacter baumannii (strain AB307-0294).